The primary structure comprises 316 residues: Porphobilinogen deaminase (316 aa).

S-(dipyrrolylmethanemethyl)cysteine is present on C240.

It belongs to the HMBS family. In terms of assembly, monomer. Dipyrromethane serves as cofactor.

It catalyses the reaction 4 porphobilinogen + H2O = hydroxymethylbilane + 4 NH4(+). It functions in the pathway porphyrin-containing compound metabolism; protoporphyrin-IX biosynthesis; coproporphyrinogen-III from 5-aminolevulinate: step 2/4. In terms of biological role, tetrapolymerization of the monopyrrole PBG into the hydroxymethylbilane pre-uroporphyrinogen in several discrete steps. This is Porphobilinogen deaminase from Alkaliphilus metalliredigens (strain QYMF).